Here is a 227-residue protein sequence, read N- to C-terminus: Ribosomal RNA small subunit methyltransferase G (227 aa).

S-adenosyl-L-methionine-binding positions include Gly-69, Phe-74, 119–120 (VE), and Arg-134.

This sequence belongs to the methyltransferase superfamily. RNA methyltransferase RsmG family.

It localises to the cytoplasm. Functionally, specifically methylates the N7 position of a guanine in 16S rRNA. The protein is Ribosomal RNA small subunit methyltransferase G of Mycoplasmopsis pulmonis (strain UAB CTIP) (Mycoplasma pulmonis).